The primary structure comprises 281 residues: 4-diphosphocytidyl-2-C-methyl-D-erythritol kinase (281 aa).

Lys-11 is a catalytic residue. ATP is bound at residue Leu-92 to Ala-102. Asp-132 is a catalytic residue.

The protein belongs to the GHMP kinase family. IspE subfamily.

The enzyme catalyses 4-CDP-2-C-methyl-D-erythritol + ATP = 4-CDP-2-C-methyl-D-erythritol 2-phosphate + ADP + H(+). It functions in the pathway isoprenoid biosynthesis; isopentenyl diphosphate biosynthesis via DXP pathway; isopentenyl diphosphate from 1-deoxy-D-xylulose 5-phosphate: step 3/6. Functionally, catalyzes the phosphorylation of the position 2 hydroxy group of 4-diphosphocytidyl-2C-methyl-D-erythritol. The chain is 4-diphosphocytidyl-2-C-methyl-D-erythritol kinase from Ehrlichia ruminantium (strain Gardel).